A 553-amino-acid chain; its full sequence is NAD(P)H-quinone oxidoreductase chain 4 2 (553 aa).

The next 14 helical transmembrane spans lie at 6–26 (FPWL…IPVI), 34–54 (VRWF…YVFL), 87–107 (ISAP…LAAW), 115–135 (LFYF…VAQD), 136–156 (LLLF…LVSI), 169–189 (FLLY…AMAL), 210–230 (ALEL…LAIF), 244–264 (SAPV…YGLI), 276–296 (IYFA…GAFA), 312–332 (VSHM…GISG), 333–353 (AMLQ…LAGV), 376–396 (VFAL…MSGF), 418–438 (VVTV…LLSM), and 487–507 (IFIA…PQLA).

The protein belongs to the complex I subunit 4 family.

The protein resides in the cellular thylakoid membrane. It carries out the reaction a plastoquinone + NADH + (n+1) H(+)(in) = a plastoquinol + NAD(+) + n H(+)(out). The enzyme catalyses a plastoquinone + NADPH + (n+1) H(+)(in) = a plastoquinol + NADP(+) + n H(+)(out). Functionally, NDH-1 shuttles electrons from NAD(P)H, via FMN and iron-sulfur (Fe-S) centers, to quinones in the respiratory chain. The immediate electron acceptor for the enzyme in this species is believed to be plastoquinone. Couples the redox reaction to proton translocation (for every two electrons transferred, four hydrogen ions are translocated across the cytoplasmic membrane), and thus conserves the redox energy in a proton gradient. In Microcystis aeruginosa (strain NIES-843 / IAM M-2473), this protein is NAD(P)H-quinone oxidoreductase chain 4 2.